The chain runs to 251 residues: Fibroblast growth factor 23 (251 aa).

Positions 1 to 24 (MLGTCLRLLVGVLCTVCSLGTARA) are cleaved as a signal peptide. Cysteine 95 and cysteine 113 are oxidised to a cystine. O-linked (GalNAc) threonine glycans are attached at residues threonine 171 and threonine 178. Residues 175–251 (RRHTRSAEDP…DRCRPFPRFV (77 aa)) are disordered. The span at 179–189 (RSAEDPPERDP) shows a compositional bias: basic and acidic residues. Serine 180 is modified (phosphoserine; by FAM20C).

This sequence belongs to the heparin-binding growth factors family. As to quaternary structure, interacts with FGFR1. Interacts with FGFR2, FGFR3 and FGFR4. Affinity between fibroblast growth factors (FGFs) and their receptors is increased by KL and heparan sulfate glycosaminoglycans that function as coreceptors. Post-translationally, following secretion this protein is inactivated by cleavage into a N-terminal fragment and a C-terminal fragment. The processing is effected by proprotein convertases. In terms of processing, O-glycosylated at Thr-171 and Thr-178 by GALNT3 and glycosylation of Thr-178 requires previous glycosylation at Thr171. Glycosylation is necessary for secretion; it blocks processing by proprotein convertases when the O-glycan is alpha 2,6-sialylated. Competition between proprotein convertase cleavage and block of cleavage by O-glycosylation determines the level of secreted active FGF23. Phosphorylation at Ser-180 mediated by FAM20C slows down glycosylation at Thr-178 notably. As to expression, mainly expressed in the brain and thymus at low levels. In brain; preferentially expressed in the ventrolateral thalamic nucleus.

It localises to the secreted. In terms of biological role, regulator of phosphate homeostasis. Inhibits renal tubular phosphate transport by reducing SLC34A1 levels. Acts directly on the parathyroid to decrease PTH secretion. Regulator of vitamin-D metabolism. Negatively regulates osteoblasts differentiation and matrix mineralization. Up-regulates EGR1 expression in the presence of KL. This is Fibroblast growth factor 23 (Fgf23) from Mus musculus (Mouse).